Consider the following 311-residue polypeptide: MNRGANSDSIPTDLIYEILSRLSVKPITRFRCVSKLWESIICRQDFTELFHNRSSSNPRLLIGVIQGGEWNFFSSPQPQNHYGKSSLVVAADSHMKFSEDKRPRYYSYASGLLYFPNIRISNHNDDVVRVICNPSTRQYAILPPDLRTRYRDSGRLFRNKLGVINLEDDYDGGYLLKLRMFVLEDFEKQKWTTYVHTLRDENKIKDNDNVYVVGATASGQIVLARNKAYKPFYVFYFNPEKSTLQSVEIQGVREEEDWFHRVYYFVDHVEDLRFDVMKTTYAATSIRPAEQNTSTSSREDHLVRTVKRKRA.

An F-box domain is found at 4-53 (GANSDSIPTDLIYEILSRLSVKPITRFRCVSKLWESIICRQDFTELFHNR). Positions 287 to 311 (RPAEQNTSTSSREDHLVRTVKRKRA) are disordered.

The sequence is that of Putative F-box protein At1g31090 from Arabidopsis thaliana (Mouse-ear cress).